A 519-amino-acid polypeptide reads, in one-letter code: 3-octaprenyl-4-hydroxybenzoate carboxy-lyase (519 aa).

Asparagine 177 is a binding site for Mn(2+). Residues 180 to 182 (IYR), 194 to 196 (RWL), and 199 to 200 (RG) contribute to the prenylated FMN site. Glutamate 243 lines the Mn(2+) pocket. Aspartate 318 functions as the Proton donor in the catalytic mechanism.

Belongs to the UbiD family. Homohexamer. Requires prenylated FMN as cofactor. It depends on Mn(2+) as a cofactor.

The protein localises to the cell membrane. It carries out the reaction a 4-hydroxy-3-(all-trans-polyprenyl)benzoate + H(+) = a 2-(all-trans-polyprenyl)phenol + CO2. The protein operates within cofactor biosynthesis; ubiquinone biosynthesis. Catalyzes the decarboxylation of 3-octaprenyl-4-hydroxy benzoate to 2-octaprenylphenol, an intermediate step in ubiquinone biosynthesis. This chain is 3-octaprenyl-4-hydroxybenzoate carboxy-lyase, found in Burkholderia thailandensis (strain ATCC 700388 / DSM 13276 / CCUG 48851 / CIP 106301 / E264).